Reading from the N-terminus, the 574-residue chain is High-affinity methionine permease (574 aa).

At 1–61 the chain is on the cytoplasmic side; it reads MSEGRTFLSQ…TELDQGEKQL (61 aa). Residue K28 forms a Glycyl lysine isopeptide (Lys-Gly) (interchain with G-Cter in ubiquitin) linkage. Residues 62–82 traverse the membrane as a helical segment; it reads GILSCIGLICNRMLGTGVFAV. Over 83 to 92 the chain is Extracellular; the sequence is SSTIYTLCGS. A helical transmembrane segment spans residues 93–113; that stretch reads VGLALIMWAVGAIIAISGLYV. At 114–140 the chain is on the cytoplasmic side; the sequence is YMEFGTAIPKNGGEKNYLEAIFRKPKF. Residues 141–161 traverse the membrane as a helical segment; that stretch reads FITCMYAAYIFFLGWAAGNSI. Residues 162 to 182 lie on the Extracellular side of the membrane; the sequence is NTAIMFLTAADTEVTKWNQRG. The helical transmembrane segment at 183–203 threads the bilayer; sequence IGVAVVFFAFLINSLNVKIGL. Topologically, residues 204 to 207 are cytoplasmic; it reads YLQN. Residues 208 to 228 traverse the membrane as a helical segment; the sequence is ILGIFKIGIVLFISITGWVAL. Over 229-293 the chain is Extracellular; it reads GGGLKDGYQS…VRTLKIAGPT (65 aa). The helical transmembrane segment at 294-314 threads the bilayer; sequence SMVFLAIIYIFVNIAYFAVVP. Residues 315-340 are Cytoplasmic-facing; sequence KDKLISSKLILAADFFDIVFGGQAKR. Residues 341-361 form a helical membrane-spanning segment; that stretch reads AAAALVGLSALGNVLSVIFSQ. Residues 362 to 418 are Extracellular-facing; the sequence is GRIIQQLGREGVLPFSNFFASSKPFNSPMVGLFQHFIVCTVTILAPPPGDAYLLVQN. Residues 419–439 traverse the membrane as a helical segment; the sequence is LISYPMNIINFAISAGLLWIY. Topologically, residues 440–455 are cytoplasmic; it reads WQRRQGKIEWNPPIKA. A helical membrane pass occupies residues 456–476; sequence GVFVTGFFTLSNLYLIIAPYV. Over 477-490 the chain is Extracellular; that stretch reads PPSNGESVYSSMPY. A helical transmembrane segment spans residues 491–511; sequence WIHCVIAWGIFFFGGVYYVVW. Residues 512–574 are Cytoplasmic-facing; the sequence is AQLLPRWGHY…HYKSEQEKSL (63 aa). The residue at position 552 (T552) is a Phosphothreonine. The residue at position 573 (S573) is a Phosphoserine.

To yeast low affinity methionine permease (MUP3).

It is found in the membrane. Its function is as follows. High affinity permease for methionine. This chain is High-affinity methionine permease (MUP1), found in Saccharomyces cerevisiae (strain ATCC 204508 / S288c) (Baker's yeast).